We begin with the raw amino-acid sequence, 412 residues long: 4-hydroxy-3-methylbut-2-en-1-yl diphosphate synthase (ferredoxin) (412 aa).

Polar residues predominate over residues 1–12 (MQTLDRPNAPSQ). The interval 1–22 (MQTLDRPNAPSQQPYPEPVYPR) is disordered. Positions 314, 317, 348, and 355 each coordinate [4Fe-4S] cluster.

It belongs to the IspG family. Requires [4Fe-4S] cluster as cofactor.

The catalysed reaction is (2E)-4-hydroxy-3-methylbut-2-enyl diphosphate + 2 oxidized [2Fe-2S]-[ferredoxin] + H2O = 2-C-methyl-D-erythritol 2,4-cyclic diphosphate + 2 reduced [2Fe-2S]-[ferredoxin] + H(+). The protein operates within isoprenoid biosynthesis; isopentenyl diphosphate biosynthesis via DXP pathway; isopentenyl diphosphate from 1-deoxy-D-xylulose 5-phosphate: step 5/6. Its function is as follows. Converts 2C-methyl-D-erythritol 2,4-cyclodiphosphate (ME-2,4cPP) into 1-hydroxy-2-methyl-2-(E)-butenyl 4-diphosphate. This is 4-hydroxy-3-methylbut-2-en-1-yl diphosphate synthase (ferredoxin) from Synechococcus sp. (strain JA-3-3Ab) (Cyanobacteria bacterium Yellowstone A-Prime).